Consider the following 1016-residue polypeptide: Protein kinase C-like 2 (1016 aa).

An REM-1 1 domain is found at 1–68; sequence MDMIDEAITE…LEKLKLRKNG (68 aa). The disordered stretch occupies residues 68-101; it reads GVRKSNSEKPSVGIEKNPSFSTTKSAKSFSSTSS. The segment covering 86–101 has biased composition (low complexity); it reads SFSTTKSAKSFSSTSS. The REM-1 2 domain maps to 111-188; the sequence is NYDTPLTISK…LKRYHDLHIE (78 aa). Residues 195 to 307 enclose the C2 domain; it reads PSTESRGNLN…VEKQRRKKVE (113 aa). 2 Phorbol-ester/DAG-type zinc fingers span residues 405 to 453 and 473 to 523; these read GHKF…VTKC and PHHF…PDFC. The disordered stretch occupies residues 543 to 602; that stretch reads YKAQQHKQKSSHHKHHHHKKSKSSSSKHKENDKASVSITTTTTPSITPADPVPTSPKPLA. A compositionally biased stretch (basic residues) spans 546–568; it reads QQHKQKSSHHKHHHHKKSKSSSS. The segment covering 579–590 has biased composition (low complexity); that stretch reads SITTTTTPSITP. Residues 683 to 942 form the Protein kinase domain; it reads FTFLSVLGKG…AEDVMTHPFF (260 aa). Residues 689–697 and Lys712 contribute to the ATP site; that span reads LGKGNFGKV. Asp808 (proton acceptor) is an active-site residue. The region spanning 943 to 1013 is the AGC-kinase C-terminal domain; the sequence is SNINWDDIYH…SCEDDKPSTT (71 aa). Thr984 is modified (phosphothreonine).

Belongs to the protein kinase superfamily. AGC Ser/Thr protein kinase family. PKC subfamily. In terms of assembly, interacts with rho2.

It catalyses the reaction L-seryl-[protein] + ATP = O-phospho-L-seryl-[protein] + ADP + H(+). The enzyme catalyses L-threonyl-[protein] + ATP = O-phospho-L-threonyl-[protein] + ADP + H(+). Its function is as follows. Involved in the control of the cell shape. Target of the inhibitor staurosporine. The protein is Protein kinase C-like 2 (pck2) of Schizosaccharomyces pombe (strain 972 / ATCC 24843) (Fission yeast).